A 68-amino-acid polypeptide reads, in one-letter code: MGEISITKLLVVAALIILVFGTKKLRTLGGDLGSAIKGFKKAMNEDDDSAKKTTAEEEAPAQKLSHKE.

Residues 1 to 21 form a helical membrane-spanning segment; sequence MGEISITKLLVVAALIILVFG. Residues 43–68 form a disordered region; sequence MNEDDDSAKKTTAEEEAPAQKLSHKE.

This sequence belongs to the TatA/E family. TatE subfamily.

It localises to the cell inner membrane. Part of the twin-arginine translocation (Tat) system that transports large folded proteins containing a characteristic twin-arginine motif in their signal peptide across membranes. TatE shares overlapping functions with TatA. The chain is Probable Sec-independent protein translocase protein TatE from Klebsiella pneumoniae subsp. pneumoniae (strain ATCC 700721 / MGH 78578).